Reading from the N-terminus, the 2641-residue chain is CCR4-NOT transcription complex subunit let-711 (2641 aa).

The LXXLL motif lies at 660-664; sequence LSELL. Disordered stretches follow at residues 771–887, 936–963, 1197–1221, 1518–1565, and 2034–2054; these read SGRS…QNAQ, TQRQ…PQQQ, EGGR…PAAA, QSKI…SQGA, and GMNN…AGLQ. Composition is skewed to low complexity over residues 774–795, 802–839, and 853–877; these read SSSV…QQQQ, LPPS…SQQQ, and PAQF…HMMG. Residues 951-960 are compositionally biased toward pro residues; it reads PQRPSGPPTP. Over residues 1205-1221 the composition is skewed to low complexity; the sequence is GSAQAGSASSTPTPAAA. A compositionally biased stretch (low complexity) spans 2034-2046; that stretch reads GMNNAMNNGAGNA. Residues 2341–2345 carry the LXXLL motif; the sequence is LRVLL. Residues 2609–2641 are disordered; the sequence is AQGSQPQAQPDGAPGPLGNNTGAANQQQNPNTN.

This sequence belongs to the CNOT1 family. As to quaternary structure, component of the CCR4-NOT complex at least composed of ccf-1, ccr-4 and let-711, which is required for germ cell development in hermaphrodites. Within the complex interacts with ccf-1 and ccr-4; the interactions are direct. As to expression, highly expressed in the germline of hermaphrodites.

Its subcellular location is the nucleus. Functionally, scaffolding component of the CCR4-NOT complex which is one of the major cellular mRNA deadenylases and is linked to various cellular processes including bulk mRNA degradation, miRNA-mediated repression, translational repression during translational initiation and general transcription regulation. Positively regulates the accumulation of the CCR4-NOT complex component ccr-1. Within the complex promotes germ cell development and fertility in hermaphrodites. Additional complex functions may be a consequence of its influence on mRNA expression. Its scaffolding function implies its interaction with the catalytic complex module and diverse RNA-binding proteins mediating the complex recruitment to selected mRNA 3'UTRs. Mediates the recruitment of the CCR4-NOT complex to miRNA targets and to the RISC complex. Acts as a transcriptional repressor. Represses the ligand-dependent transcriptional activation by nuclear receptors. In embryos, plays a role in female pronucleus and mitotic spindle positioning during the first cleavage divisions after fertilization. This may partly be through negatively regulating the accumulation of zyg-9 at the centrosome. Negatively regulates the formation of long astral microtubules in developing embryos. Required for the stabilization and degradation of maternal mRNAs such as nos-2 in somatic blastomeres. The polypeptide is CCR4-NOT transcription complex subunit let-711 (Caenorhabditis elegans).